The following is a 277-amino-acid chain: 2-dehydro-3-deoxyphosphooctonate aldolase (277 aa).

It belongs to the KdsA family.

It localises to the cytoplasm. The catalysed reaction is D-arabinose 5-phosphate + phosphoenolpyruvate + H2O = 3-deoxy-alpha-D-manno-2-octulosonate-8-phosphate + phosphate. It functions in the pathway carbohydrate biosynthesis; 3-deoxy-D-manno-octulosonate biosynthesis; 3-deoxy-D-manno-octulosonate from D-ribulose 5-phosphate: step 2/3. Its pathway is bacterial outer membrane biogenesis; lipopolysaccharide biosynthesis. The sequence is that of 2-dehydro-3-deoxyphosphooctonate aldolase from Brucella melitensis biotype 2 (strain ATCC 23457).